Consider the following 519-residue polypeptide: PTS system mannitol-specific EIICB component (519 aa).

Residues 1–30 (MAQTETQEKKGLGRKVQAFGSFLSSMIMPN) are Cytoplasmic-facing. The PTS EIIC type-2 domain maps to 19–351 (FGSFLSSMIM…MKFTKEPKQD (333 aa)). Residues 31–52 (IGAFIAWGFIAAIFIDNGWYPN) traverse the membrane as a helical segment. Over 53–56 (KELS) the chain is Extracellular. The helical transmembrane segment at 57–77 (QLAGPMITYLIPLLIAFSGGR) threads the bilayer. Residues 78 to 141 (LIHDLRGGIV…QGFEMLFNNF (64 aa)) lie on the Cytoplasmic side of the membrane. Residues 142 to 163 (SAGILAFIMTILGFKLLAPIMQ) traverse the membrane as a helical segment. Residues 164–172 (FIMHILSVA) lie on the Extracellular side of the membrane. A helical membrane pass occupies residues 173-193 (VEFLVHLHLLPIVSIIVEPAK). The Cytoplasmic segment spans residues 194 to 280 (ILFLNNAINH…VLMRPLLFIA (87 aa)). Residues 281–300 (VILGGMTGVATYQATGFGFK) form a helical membrane-spanning segment. The Extracellular segment spans residues 301–320 (SPASPGSFIVYCLNAPKGEF). A helical membrane pass occupies residues 321–342 (LHMVLGVFLAALVSFVVAALIM). At 343–519 (KFTKEPKQDL…NNLKKDQDKA (177 aa)) the chain is on the cytoplasmic side. Residues 366-406 (KSSVSSKLTGATTGTGAAGVAANKANGEDQNEASSEDEEED) form a disordered region. Low complexity predominate over residues 367 to 387 (SSVSSKLTGATTGTGAAGVAA). Residues 394 to 406 (DQNEASSEDEEED) are compositionally biased toward acidic residues. Positions 425-519 (DHVIFACDAG…NNLKKDQDKA (95 aa)) constitute a PTS EIIB type-2 domain. Residue cysteine 431 is the Phosphocysteine intermediate; for EIIB activity of the active site. Cysteine 431 carries the phosphocysteine; by EIIA modification.

In terms of assembly, homodimer.

The protein localises to the cell membrane. The catalysed reaction is D-mannitol(out) + N(pros)-phospho-L-histidyl-[protein] = D-mannitol 1-phosphate(in) + L-histidyl-[protein]. Its function is as follows. The phosphoenolpyruvate-dependent sugar phosphotransferase system (sugar PTS), a major carbohydrate active transport system, catalyzes the phosphorylation of incoming sugar substrates concomitantly with their translocation across the cell membrane. The enzyme II CmtAB PTS system is involved in D-mannitol transport. The chain is PTS system mannitol-specific EIICB component (mtlA) from Staphylococcus haemolyticus (strain JCSC1435).